The chain runs to 144 residues: Large ribosomal subunit protein uL15 (144 aa).

The segment at 20-49 is disordered; it reads GRGIGSGLGKTGGRGHKGQKSRSGGFHKVG. Positions 21–31 are enriched in gly residues; the sequence is RGIGSGLGKTG.

It belongs to the universal ribosomal protein uL15 family. Part of the 50S ribosomal subunit.

Functionally, binds to the 23S rRNA. In Neisseria meningitidis serogroup A / serotype 4A (strain DSM 15465 / Z2491), this protein is Large ribosomal subunit protein uL15.